Here is a 501-residue protein sequence, read N- to C-terminus: Cytochrome P450 76M5 (501 aa).

A helical membrane pass occupies residues 5-25 (ELWVLAAALAVSLLYYLAALM). C443 provides a ligand contact to heme.

It belongs to the cytochrome P450 family. The cofactor is heme.

The protein resides in the membrane. It carries out the reaction ent-sandaracopimaradien-3beta-ol + reduced [NADPH--hemoprotein reductase] + O2 = oryzalexin E + oxidized [NADPH--hemoprotein reductase] + H2O + H(+). Enzyme of the diterpenoid metabolism involved in the biosynthesis of the oryzalexin class of phytoalexins. Hydroxylates ent-sandaracopimaradien. The chain is Cytochrome P450 76M5 from Oryza sativa subsp. japonica (Rice).